The sequence spans 412 residues: MKNVVALILAGGQGTRLGVLTEKIAKPAVQFGGKYRLIDFTLSNCVNSGIYKIGVLTQYKPHLLNQHIGIGKPWDLDRKDGGVTILQPYYTEKKGVWYNGTADAVYRNIEFVDDYNPEYVVILSGDHIYSMDYNELLDYHKAKSALATVACMEVPLSEASRFGIMVTDLENRIIEFQEKPKQPKSTLASLGIYVFQWSFIREVLIEDAKNDQSSHDFGKDIIPKIIQTERVFAFPFDGYWKDVGTIYSYWESNLELTRPIPPFNIHDENWRIYTHSKEMPPAYIADSTKVKNSLISEGCEIYGAVSNSVLAQGVEIGKGSIVKNSVIMSNVRIGENCYIENAIIAENVVIGDFVKIGVGEFAESKLNKKVYNSEITVIGMDSIIESKVEIGKNCVVGIDMIVNKNLNSGEYI.

Alpha-D-glucose 1-phosphate is bound by residues Tyr98, Gly163, 178 to 179 (EK), and Ser189.

It belongs to the bacterial/plant glucose-1-phosphate adenylyltransferase family. In terms of assembly, homotetramer.

The catalysed reaction is alpha-D-glucose 1-phosphate + ATP + H(+) = ADP-alpha-D-glucose + diphosphate. It participates in glycan biosynthesis; glycogen biosynthesis. Functionally, involved in the biosynthesis of ADP-glucose, a building block required for the elongation reactions to produce glycogen. Catalyzes the reaction between ATP and alpha-D-glucose 1-phosphate (G1P) to produce pyrophosphate and ADP-Glc. The sequence is that of Glucose-1-phosphate adenylyltransferase from Thermosipho africanus (strain TCF52B).